We begin with the raw amino-acid sequence, 182 residues long: ATP-dependent protease subunit HslV (182 aa).

Residue threonine 12 is part of the active site. Alanine 167, cysteine 170, and threonine 173 together coordinate Na(+).

The protein belongs to the peptidase T1B family. HslV subfamily. A double ring-shaped homohexamer of HslV is capped on each side by a ring-shaped HslU homohexamer. The assembly of the HslU/HslV complex is dependent on binding of ATP.

It localises to the cytoplasm. It carries out the reaction ATP-dependent cleavage of peptide bonds with broad specificity.. Allosterically activated by HslU binding. Its function is as follows. Protease subunit of a proteasome-like degradation complex believed to be a general protein degrading machinery. This Chlorobium phaeobacteroides (strain BS1) protein is ATP-dependent protease subunit HslV.